A 322-amino-acid chain; its full sequence is tRNA-specific adenosine deaminase subunit TAD3 (322 aa).

A CMP/dCMP-type deaminase domain is found at 162-283; that stretch reads EVRNELSRAS…EMQRTGSLKL (122 aa). Histidine 216, cysteine 254, cysteine 257, and cysteine 322 together coordinate Zn(2+).

This sequence belongs to the cytidine and deoxycytidylate deaminase family. ADAT3 subfamily. In terms of assembly, heterodimer with TAD2.

The protein resides in the cytoplasm. The protein localises to the nucleus. Its subcellular location is the peroxisome. In terms of biological role, structural subunit of tRNA-specific adenosine deaminase, which deaminates adenosine-34 (the first, also called wobble position of the anticodon) to inosine in many tRNAs. Inosine-34 allows the decoding of 3 different nucleotides at the third position of mRNA codons, as inosine is able to pair with U, C, and A. The polypeptide is tRNA-specific adenosine deaminase subunit TAD3 (TAD3) (Saccharomyces cerevisiae (strain ATCC 204508 / S288c) (Baker's yeast)).